Consider the following 70-residue polypeptide: Large ribosomal subunit protein uL29 (70 aa).

It belongs to the universal ribosomal protein uL29 family.

The protein is Large ribosomal subunit protein uL29 of Prochlorococcus marinus (strain MIT 9303).